Consider the following 147-residue polypeptide: MAIAEITEKLLAAKKAKGISFEDLEKIVGCDETWIASVIYRQASASTEEAEKIVTALGLPAELAEPLTVPPMKGSLEPVIPTDPLVYRFYEIMQVYGVPVKAVIHEKFGDGIMSAIDFSIEVDKVPDPKGDRVQVTMCGKFLPYKKW.

Active-site residues include arginine 88, glutamate 91, and serine 114.

This sequence belongs to the cyanase family.

The enzyme catalyses cyanate + hydrogencarbonate + 3 H(+) = NH4(+) + 2 CO2. Functionally, catalyzes the reaction of cyanate with bicarbonate to produce ammonia and carbon dioxide. The polypeptide is Cyanate hydratase (Acaryochloris marina (strain MBIC 11017)).